The primary structure comprises 319 residues: ATP-dependent 6-phosphofructokinase (319 aa).

G11 lines the ATP pocket. Residue 21–25 participates in ADP binding; the sequence is RAVAR. Residues 72 to 73 and 102 to 105 each bind ATP; these read RY and GDGS. Residue D103 coordinates Mg(2+). 125 to 127 is a binding site for substrate; that stretch reads TID. The active-site Proton acceptor is the D127. Residue R154 coordinates ADP. Substrate contacts are provided by residues R162 and 169–171; that span reads MGR. Residues 185 to 187 and R211 each bind ADP; that span reads GAE. Substrate is bound by residues E222, R243, and 249-252; that span reads HIVR.

Belongs to the phosphofructokinase type A (PFKA) family. ATP-dependent PFK group I subfamily. Prokaryotic clade 'B1' sub-subfamily. As to quaternary structure, homotetramer. It depends on Mg(2+) as a cofactor.

The protein localises to the cytoplasm. The enzyme catalyses beta-D-fructose 6-phosphate + ATP = beta-D-fructose 1,6-bisphosphate + ADP + H(+). It functions in the pathway carbohydrate degradation; glycolysis; D-glyceraldehyde 3-phosphate and glycerone phosphate from D-glucose: step 3/4. With respect to regulation, allosterically activated by ADP and other diphosphonucleosides, and allosterically inhibited by phosphoenolpyruvate. Catalyzes the phosphorylation of D-fructose 6-phosphate to fructose 1,6-bisphosphate by ATP, the first committing step of glycolysis. In Lacticaseibacillus casei (strain BL23) (Lactobacillus casei), this protein is ATP-dependent 6-phosphofructokinase.